Reading from the N-terminus, the 1165-residue chain is Integrin alpha-L (1165 aa).

Residues 1 to 23 (MNSCIIVLRLLLSGPFVFAPAWS) form the signal peptide. Residues 24 to 1084 (YNLDVRHVQN…MKVDLVYEKE (1061 aa)) are Extracellular-facing. 2 FG-GAP repeats span residues 29 to 80 (RHVQ…DCLP) and 81 to 138 (VTLS…GPVL). An N-linked (GlcNAc...) asparagine glycan is attached at Asn33. Cys71 and Cys78 form a disulfide bridge. Asn86 is a glycosylation site (N-linked (GlcNAc...) asparagine). Cys108 and Cys126 are oxidised to a cystine. The VWFA domain maps to 153-324 (DLVFLFDGSM…EKLKDLFTEL (172 aa)). Asn185 carries an N-linked (GlcNAc...) asparagine glycan. 5 FG-GAP repeats span residues 335–386 (SKQD…SSTF), 387–442 (VGNE…GGPW), 443–503 (SQIQ…EFQM), 504–560 (VSEL…GLSP), and 564–624 (QRIE…FSPA). Asp465, Asp467, Asp469, Glu473, Asp527, Asn529, Asp531, Asp535, Asp587, Asp591, and Asp595 together coordinate Ca(2+). Residues Asn646, Asn667, and Asn723 are each glycosylated (N-linked (GlcNAc...) asparagine). Cys650 and Cys704 are disulfide-bonded. 2 disulfides stabilise this stretch: Cys768-Cys774 and Cys842-Cys858. Asn859, Asn894, and Asn929 each carry an N-linked (GlcNAc...) asparagine glycan. 2 disulfides stabilise this stretch: Cys994–Cys1009 and Cys1017–Cys1048. N-linked (GlcNAc...) asparagine glycans are attached at residues Asn1056 and Asn1067. Residues 1085-1105 (MLYLYVLSGIGGLLLLFLIFI) traverse the membrane as a helical segment. Residues 1106-1165 (ALYKVGFFKRNLKEKMEANVDASSEIPGEDAGQPELEKECKDPGCLEPLQKTDEDGSGGD) lie on the Cytoplasmic side of the membrane. The GFFKR motif signature appears at 1111 to 1115 (GFFKR). Residues 1123–1165 (ANVDASSEIPGEDAGQPELEKECKDPGCLEPLQKTDEDGSGGD) form a disordered region. A compositionally biased stretch (basic and acidic residues) spans 1140–1159 (ELEKECKDPGCLEPLQKTDE).

This sequence belongs to the integrin alpha chain family. Heterodimer of an alpha and a beta subunit. The ITGAL alpha subunit associates with the ITGB2 beta subunit. Interacts with THBD. Interacts with CD226. Post-translationally, in resting T-cells, up to 40% of surface ITGAL is constitutively phosphorylated. Phosphorylation causes conformational changes needed for ligand binding and is necessary for the activation by some physiological agents.

It localises to the cell membrane. In terms of biological role, integrin ITGAL/ITGB2 is a receptor for ICAM1, ICAM2, ICAM3 and ICAM4. Integrin ITGAL/ITGB2 is a receptor for F11R. Integrin ITGAL/ITGB2 is a receptor for the secreted form of ubiquitin-like protein ISG15; the interaction is mediated by ITGAL. Involved in a variety of immune phenomena including leukocyte-endothelial cell interaction, cytotoxic T-cell mediated killing, and antibody dependent killing by granulocytes and monocytes. Contributes to natural killer cell cytotoxicity. Involved in leukocyte adhesion and transmigration of leukocytes including T-cells and neutrophils. Acts as a platform at the immunological synapse to translate TCR engagement and density of the ITGAL ligand ICAM1 into graded adhesion. Required for generation of common lymphoid progenitor cells in bone marrow, indicating the role in lymphopoiesis. Integrin ITGAL/ITGB2 in association with ICAM3, contributes to apoptotic neutrophil phagocytosis by macrophages. This is Integrin alpha-L from Bos taurus (Bovine).